Here is a 529-residue protein sequence, read N- to C-terminus: E3 ubiquitin-protein ligase arih1 (529 aa).

Disordered regions lie at residues 1-29 and 46-69; these read MDSD…HEDE and ERAG…EEDE. A compositionally biased stretch (gly residues) spans 51–64; it reads CGEGGGSALGPGPG. A UBA-like region spans residues 77–125; that stretch reads TAEQILQHMVECIREVNEVIQNPATITRILLSHFNWDKEKLMERYFDGN. Residues 154 to 365 form a TRIAD supradomain region; it reads LDMPCQICYL…SAWYNCNRYN (212 aa). Positions 158, 161, 175, 177, 180, 183, 203, 208, 248, 253, 269, 271, 276, 279, 284, 289, 316, and 319 each coordinate Zn(2+). Residues 158-208 form an RING-type 1 zinc finger; that stretch reads CQICYLNYPNSYFTGLECGHKFCMQCWGEYLTTKIIEEGMGQTISCPAHGC. An IBR-type zinc finger spans residues 228-289; it reads LKYQHLITNS…GENWHDPVKC (62 aa). Residues 316 to 347 form an RING-type 2; atypical zinc finger; the sequence is CPKCHVTIEKDGGCNHMVCRNQNCKAEFCWVC. Cys329 is an active-site residue. Zn(2+)-binding residues include Cys334, Cys339, Cys344, Cys347, His354, and Cys361. Residues 380 to 529 form an ariadne domain region; it reads RAALQRYLFY…EKDLWEYIED (150 aa).

This sequence belongs to the RBR family. Ariadne subfamily. As to quaternary structure, interacts (via the first RING-type zinc finger) with ube2l3. Associates with cullin-RING ubiquitin ligase (CRL) complexes containing neddylated cullin.

It is found in the cytoplasm. The protein resides in the nucleus. It catalyses the reaction [E2 ubiquitin-conjugating enzyme]-S-ubiquitinyl-L-cysteine + [acceptor protein]-L-lysine = [E2 ubiquitin-conjugating enzyme]-L-cysteine + [acceptor protein]-N(6)-ubiquitinyl-L-lysine.. It functions in the pathway protein modification; protein ubiquitination. Autoinhibited by the ariadne domain, which masks the second RING-type zinc finger that contains the active site and inhibits the E3 activity. Inhibition is relieved upon binding to neddylated cullin-RING ubiquitin ligase complexes, which activate the E3 ligase activity of ARIH1. In terms of biological role, E3 ubiquitin-protein ligase, which catalyzes ubiquitination of target proteins together with ubiquitin-conjugating enzyme E2 ube2l3. Acts as an atypical E3 ubiquitin-protein ligase by working together with cullin-RING ubiquitin ligase (CRL) complexes and initiating ubiquitination of CRL substrates: associates with CRL complexes and specifically mediates addition of the first ubiquitin on CRLs targets. The initial ubiquitin is then elongated. E3 ubiquitin-protein ligase activity is activated upon binding to neddylated cullin-RING ubiquitin ligase complexes. The polypeptide is E3 ubiquitin-protein ligase arih1 (arih1) (Xenopus laevis (African clawed frog)).